We begin with the raw amino-acid sequence, 214 residues long: 3-isopropylmalate dehydratase small subunit (214 aa).

Belongs to the LeuD family. LeuD type 1 subfamily. In terms of assembly, heterodimer of LeuC and LeuD.

The catalysed reaction is (2R,3S)-3-isopropylmalate = (2S)-2-isopropylmalate. The protein operates within amino-acid biosynthesis; L-leucine biosynthesis; L-leucine from 3-methyl-2-oxobutanoate: step 2/4. Functionally, catalyzes the isomerization between 2-isopropylmalate and 3-isopropylmalate, via the formation of 2-isopropylmaleate. This is 3-isopropylmalate dehydratase small subunit from Pseudomonas putida (strain W619).